A 155-amino-acid polypeptide reads, in one-letter code: Ribosome maturation factor RimP (155 aa).

The protein belongs to the RimP family.

It localises to the cytoplasm. In terms of biological role, required for maturation of 30S ribosomal subunits. The chain is Ribosome maturation factor RimP from Lachnoclostridium phytofermentans (strain ATCC 700394 / DSM 18823 / ISDg) (Clostridium phytofermentans).